The chain runs to 414 residues: Serine hydroxymethyltransferase (414 aa).

Residues leucine 121 and 125 to 127 (GHL) contribute to the (6S)-5,6,7,8-tetrahydrofolate site. Lysine 229 bears the N6-(pyridoxal phosphate)lysine mark.

It belongs to the SHMT family. As to quaternary structure, homodimer. Pyridoxal 5'-phosphate serves as cofactor.

The protein resides in the cytoplasm. The catalysed reaction is (6R)-5,10-methylene-5,6,7,8-tetrahydrofolate + glycine + H2O = (6S)-5,6,7,8-tetrahydrofolate + L-serine. The protein operates within one-carbon metabolism; tetrahydrofolate interconversion. It participates in amino-acid biosynthesis; glycine biosynthesis; glycine from L-serine: step 1/1. Its function is as follows. Catalyzes the reversible interconversion of serine and glycine with tetrahydrofolate (THF) serving as the one-carbon carrier. This reaction serves as the major source of one-carbon groups required for the biosynthesis of purines, thymidylate, methionine, and other important biomolecules. Also exhibits THF-independent aldolase activity toward beta-hydroxyamino acids, producing glycine and aldehydes, via a retro-aldol mechanism. This is Serine hydroxymethyltransferase from Janthinobacterium sp. (strain Marseille) (Minibacterium massiliensis).